Reading from the N-terminus, the 66-residue chain is Toxin BeM14 (66 aa).

One can recognise an LCN-type CS-alpha/beta domain in the interval 2 to 66 (RDAYIADDRN…IRKIPGEECR (65 aa)). Disulfide bonds link C12–C65, C16–C36, C22–C46, and C26–C48.

This sequence belongs to the long (4 C-C) scorpion toxin superfamily. Sodium channel inhibitor family. Alpha subfamily. As to expression, expressed by the venom gland.

It is found in the secreted. Functionally, alpha toxins bind voltage-independently at site-3 of sodium channels (Nav) and inhibit the inactivation of the activated channels, thereby blocking neuronal transmission. Has paralytic activity in mice. This chain is Toxin BeM14, found in Mesobuthus eupeus (Lesser Asian scorpion).